Consider the following 491-residue polypeptide: Probable cytosol aminopeptidase (491 aa).

Positions 264 and 269 each coordinate Mn(2+). The active site involves lysine 276. Residues aspartate 287, aspartate 346, and glutamate 348 each contribute to the Mn(2+) site. Arginine 350 is an active-site residue.

The protein belongs to the peptidase M17 family. The cofactor is Mn(2+).

Its subcellular location is the cytoplasm. It catalyses the reaction Release of an N-terminal amino acid, Xaa-|-Yaa-, in which Xaa is preferably Leu, but may be other amino acids including Pro although not Arg or Lys, and Yaa may be Pro. Amino acid amides and methyl esters are also readily hydrolyzed, but rates on arylamides are exceedingly low.. It carries out the reaction Release of an N-terminal amino acid, preferentially leucine, but not glutamic or aspartic acids.. Presumably involved in the processing and regular turnover of intracellular proteins. Catalyzes the removal of unsubstituted N-terminal amino acids from various peptides. This is Probable cytosol aminopeptidase from Xylella fastidiosa (strain M12).